The sequence spans 130 residues: Putative protein ZNF815 (130 aa).

The polypeptide is Putative protein ZNF815 (ZNF815P) (Homo sapiens (Human)).